Reading from the N-terminus, the 349-residue chain is Adenosine deaminase (349 aa).

Zn(2+)-binding residues include histidine 25 and histidine 27. Substrate-binding residues include histidine 27, aspartate 29, and glycine 182. Residue histidine 209 coordinates Zn(2+). Glutamate 212 functions as the Proton donor in the catalytic mechanism. A Zn(2+)-binding site is contributed by aspartate 289.

The protein belongs to the metallo-dependent hydrolases superfamily. Adenosine and AMP deaminases family. Adenosine deaminase subfamily. The cofactor is Zn(2+).

It carries out the reaction adenosine + H2O + H(+) = inosine + NH4(+). The catalysed reaction is 2'-deoxyadenosine + H2O + H(+) = 2'-deoxyinosine + NH4(+). Functionally, catalyzes the hydrolytic deamination of adenosine and 2-deoxyadenosine. In Streptococcus mutans serotype c (strain ATCC 700610 / UA159), this protein is Adenosine deaminase.